We begin with the raw amino-acid sequence, 396 residues long: Putative pyridoxal phosphate-dependent acyltransferase (396 aa).

111 to 112 (GF) is a binding site for pyridoxal 5'-phosphate. H136 provides a ligand contact to substrate. Pyridoxal 5'-phosphate contacts are provided by residues S186, 211 to 214 (DDAH), and 241 to 244 (TLSK). K244 carries the N6-(pyridoxal phosphate)lysine modification. T358 lines the substrate pocket.

It belongs to the class-II pyridoxal-phosphate-dependent aminotransferase family. In terms of assembly, homodimer. It depends on pyridoxal 5'-phosphate as a cofactor.

This is Putative pyridoxal phosphate-dependent acyltransferase from Bacillus cereus (strain ATCC 14579 / DSM 31 / CCUG 7414 / JCM 2152 / NBRC 15305 / NCIMB 9373 / NCTC 2599 / NRRL B-3711).